Consider the following 263-residue polypeptide: 3-methyl-2-oxobutanoate hydroxymethyltransferase (263 aa).

Mg(2+) is bound by residues Asp-45 and Asp-84. Residues 45–46 (DS), Asp-84, and Lys-112 each bind 3-methyl-2-oxobutanoate. Glu-114 contacts Mg(2+). The active-site Proton acceptor is Glu-180.

The protein belongs to the PanB family. As to quaternary structure, homodecamer; pentamer of dimers. It depends on Mg(2+) as a cofactor.

The protein localises to the cytoplasm. The enzyme catalyses 3-methyl-2-oxobutanoate + (6R)-5,10-methylene-5,6,7,8-tetrahydrofolate + H2O = 2-dehydropantoate + (6S)-5,6,7,8-tetrahydrofolate. It participates in cofactor biosynthesis; (R)-pantothenate biosynthesis; (R)-pantoate from 3-methyl-2-oxobutanoate: step 1/2. Catalyzes the reversible reaction in which hydroxymethyl group from 5,10-methylenetetrahydrofolate is transferred onto alpha-ketoisovalerate to form ketopantoate. This Salmonella paratyphi C (strain RKS4594) protein is 3-methyl-2-oxobutanoate hydroxymethyltransferase.